The following is a 355-amino-acid chain: cGAMP-activated phospholipase (355 aa).

The 198-residue stretch at 17–214 folds into the PNPLA domain; it reads LSLNGGGARG…VANNPSFIGL (198 aa). Positions 21-26 match the GXGXXG motif; that stretch reads GGGARG. The GXSXG signature appears at 60–64; it reads GTSIG. S62 (nucleophile) is an active-site residue. The Proton acceptor role is filled by D201. A DGA/G motif is present at residues 201–203; it reads DGG.

The protein belongs to the patatin family.

The enzyme catalyses a 1,2-diacyl-sn-glycero-3-phosphocholine + H2O = a 2-acyl-sn-glycero-3-phosphocholine + a fatty acid + H(+). The catalysed reaction is 1,2-di-(9Z-octadecenoyl)-sn-glycero-3-phosphoethanolamine + 2 H2O = sn-glycero-3-phosphoethanolamine + 2 (9Z)-octadecenoate + 2 H(+). With respect to regulation, phospholipase activity is specifically activated upon 3',3'-cGAMP (cGAMP) binding. Is not activated by the other cyclic dinucleotides 3',3'-cUAMP, 3',3'-c-diAMP and 3',3'-c-diGMP. Therefore, is specifically activated by only the nucleotide synthesized from its adjacently encoded nucleotidyltransferase (DncV). The cGAMP-activation of lipase is inhibited by T4 phage protein Acb2 (Vs.4). Effector phospholipase of a CBASS antiviral system. CBASS (cyclic oligonucleotide-based antiphage signaling system) provides immunity against bacteriophages. The CD-NTase protein (DncV) synthesizes cyclic nucleotides in response to infection; these serve as specific second messenger signals. The signals activate a diverse range of effectors, leading to bacterial cell death and thus abortive phage infection. A type II-A(GA) CBASS system. Its function is as follows. Phospholipase that is activated upon binding to the cyclic dinucleotide (CDN) second messenger 3',3'-cyclic GMP-AMP (3',3'-cGAMP). Then degrades phosphatidylethanolamine (PE) and phosphatidylglycerol (PG), the major phospholipids in the cell membrane of V.cholerae, releasing 16:1 and 18:1 free fatty acids. Upon expression in E.coli with cognate DncV, the cell inner membrane shrinks and separates from the cell wall. In terms of biological role, protects E.coli against phage infection. When the CBASS operon (capV-dncV-cap2-cap3) is introduced in E.coli MG1655 there is about 100-fold protection against phages P1 and T2. When the operon is introduced in E.coli MG1655 there is a more than 10(3) decrease in the efficiency of T2 plaque formation. Protects 100-fold against phage T5, offers no protection against T7. When the operon is introduced in E.coli MG1655 it protects against phages T2, T4, T5 and T6. Another paper shows the operon confers protection against phages P1, T2, T5 and T6 but not T4 or lambda. The protein is cGAMP-activated phospholipase of Vibrio cholerae serotype O1 (strain ATCC 39315 / El Tor Inaba N16961).